Reading from the N-terminus, the 333-residue chain is Fibronectin type III domain-containing protein 11 (333 aa).

Residues 212 to 310 enclose the Fibronectin type-III domain; that stretch reads PVMFDRKESV…DSLTLHTRPG (99 aa). The segment at 307–333 is disordered; it reads TRPGPPEGLAPSRLGKLGLSLTTPSER.

This chain is Fibronectin type III domain-containing protein 11, found in Bos taurus (Bovine).